A 138-amino-acid chain; its full sequence is Ribosomal RNA large subunit methyltransferase H (138 aa).

S-adenosyl-L-methionine contacts are provided by residues Leu-57, Gly-86, and 105–110; that span reads LSPLTF.

The protein belongs to the RNA methyltransferase RlmH family. As to quaternary structure, homodimer.

It is found in the cytoplasm. It carries out the reaction pseudouridine(1915) in 23S rRNA + S-adenosyl-L-methionine = N(3)-methylpseudouridine(1915) in 23S rRNA + S-adenosyl-L-homocysteine + H(+). In terms of biological role, specifically methylates the pseudouridine at position 1915 (m3Psi1915) in 23S rRNA. This Prochlorococcus marinus (strain MIT 9301) protein is Ribosomal RNA large subunit methyltransferase H.